The sequence spans 305 residues: Homeobox protein NANOGP8 (305 aa).

The tract at residues 1–96 (MSVDPACPQS…KEDKVPVKKQ (96 aa)) is disordered. Residues 65–82 (SPDSSTSPKGKQPTSAEN) show a composition bias toward polar residues. Residues 95-154 (KQKTRTVFSSTQLCVLNDRFQRQKYLSLQQMQELSNILNLSYKQVKTWFQNQRMKSKRWQ) constitute a DNA-binding region (homeobox). 8 consecutive repeat copies span residues 196–200 (WSNQT), 201–205 (WNNST), 206–210 (WSNQT), 216–220 (WSNHS), 221–225 (WNTQT), 226–230 (WCTQS), 231–235 (WNNQA), and 236–240 (WNSPF). The interval 196-240 (WSNQTWNNSTWSNQTQNIQSWSNHSWNTQTWCTQSWNNQAWNSPF) is 8 X repeats starting with a Trp in each unit. Residues 196-240 (WSNQTWNNSTWSNQTQNIQSWSNHSWNTQTWCTQSWNNQAWNSPF) form a sufficient for transactivation activity region. The interval 241–305 (YNCGEESLQS…YSMNMQPEDV (65 aa)) is sufficient for strong transactivation activity.

This sequence belongs to the Nanog homeobox family.

It is found in the nucleus. May act as a transcription regulator. When overexpressed, promotes entry of cells into S phase and cell proliferation. In Homo sapiens (Human), this protein is Homeobox protein NANOGP8 (NANOGP8).